A 189-amino-acid polypeptide reads, in one-letter code: Putative dihydrofolate reductase (189 aa).

One can recognise a DHFR domain in the interval 3–185 (KMNLIVAMDA…LKFEFCKWKV (183 aa)). Residues Ala-9 and 15 to 21 (GIGKNGV) each bind NADP(+). 29 to 34 (DMQYFA) contributes to the substrate binding site. 53-55 (RKC) contacts NADP(+). Arg-69 is a substrate binding site. Residues 75-77 (SRQ) and 115-122 (GGAEIYDL) contribute to the NADP(+) site.

The protein belongs to the dihydrofolate reductase family.

The enzyme catalyses (6S)-5,6,7,8-tetrahydrofolate + NADP(+) = 7,8-dihydrofolate + NADPH + H(+). Its pathway is cofactor biosynthesis; tetrahydrofolate biosynthesis; 5,6,7,8-tetrahydrofolate from 7,8-dihydrofolate: step 1/1. Its function is as follows. Key enzyme in folate metabolism. Catalyzes an essential reaction for de novo glycine and purine synthesis, and for DNA precursor synthesis. The protein is Putative dihydrofolate reductase (dhfr-1) of Caenorhabditis elegans.